Consider the following 188-residue polypeptide: FUN14 domain-containing protein 1B (188 aa).

A helical membrane pass occupies residues 21–41 (VVNIDGNIFSIYVCFFVCFFF). Positions 52–55 (YEVL) match the YXXL motif. 3 helical membrane-spanning segments follow: residues 82-102 (YSVATQIVIGGVSGWCAGFLF), 109-129 (AATAVGGGFLLLQIASHGGYI), and 167-187 (FFKKNIVVSGGFVGGFLIGLA).

The protein belongs to the FUN14 family.

It localises to the mitochondrion outer membrane. Its function is as follows. Acts as an activator of hypoxia-induced mitophagy, an important mechanism for mitochondrial quality control. In Xenopus laevis (African clawed frog), this protein is FUN14 domain-containing protein 1B (fundc1-b).